The sequence spans 320 residues: Methionyl-tRNA formyltransferase (320 aa).

S114–P117 is a binding site for (6S)-5,6,7,8-tetrahydrofolate.

Belongs to the Fmt family.

It carries out the reaction L-methionyl-tRNA(fMet) + (6R)-10-formyltetrahydrofolate = N-formyl-L-methionyl-tRNA(fMet) + (6S)-5,6,7,8-tetrahydrofolate + H(+). Attaches a formyl group to the free amino group of methionyl-tRNA(fMet). The formyl group appears to play a dual role in the initiator identity of N-formylmethionyl-tRNA by promoting its recognition by IF2 and preventing the misappropriation of this tRNA by the elongation apparatus. This is Methionyl-tRNA formyltransferase from Acinetobacter baumannii (strain AB307-0294).